The following is a 202-amino-acid chain: NADH-quinone oxidoreductase subunit C (202 aa).

It belongs to the complex I 30 kDa subunit family. As to quaternary structure, NDH-1 is composed of 14 different subunits. Subunits NuoB, C, D, E, F, and G constitute the peripheral sector of the complex.

Its subcellular location is the cell inner membrane. It catalyses the reaction a quinone + NADH + 5 H(+)(in) = a quinol + NAD(+) + 4 H(+)(out). Functionally, NDH-1 shuttles electrons from NADH, via FMN and iron-sulfur (Fe-S) centers, to quinones in the respiratory chain. The immediate electron acceptor for the enzyme in this species is believed to be ubiquinone. Couples the redox reaction to proton translocation (for every two electrons transferred, four hydrogen ions are translocated across the cytoplasmic membrane), and thus conserves the redox energy in a proton gradient. The polypeptide is NADH-quinone oxidoreductase subunit C (Acidithiobacillus ferrooxidans (strain ATCC 23270 / DSM 14882 / CIP 104768 / NCIMB 8455) (Ferrobacillus ferrooxidans (strain ATCC 23270))).